The primary structure comprises 197 residues: Nascent polypeptide-associated complex subunit alpha (197 aa).

Acidic residues predominate over residues 1–20 (MAEPVEDSVDEISSEGDSDV). Disordered stretches follow at residues 1–46 (MAEP…RKLL) and 120–154 (GADR…SKAD). Residues 36-101 (DKNERKSRKL…AKVEDMSQNS (66 aa)) form the NAC-A/B domain. Basic and acidic residues predominate over residues 134–154 (SGHDHAHDHDHSHGDCASKAD). Positions 158-195 (VNQSDIDLVVSQVGCTREQAVEALIKNKGDIVETIMQL) constitute a UBA domain.

Belongs to the NAC-alpha family.

May promote appropriate targeting of ribosome-nascent polypeptide complexes. This chain is Nascent polypeptide-associated complex subunit alpha, found in Babesia divergens.